A 218-amino-acid polypeptide reads, in one-letter code: Redox-sensing transcriptional repressor Rex (218 aa).

The segment at residues 25–64 (WYLSYVQLLHADGCESVSSTRIARAVGVDASLVAKDLSYV) is a DNA-binding region (H-T-H motif). Residue 99–104 (GVGSLG) participates in NAD(+) binding.

This sequence belongs to the transcriptional regulatory Rex family. As to quaternary structure, homodimer.

The protein resides in the cytoplasm. Its function is as follows. Modulates transcription in response to changes in cellular NADH/NAD(+) redox state. The protein is Redox-sensing transcriptional repressor Rex of Porphyromonas gingivalis (strain ATCC BAA-308 / W83).